The primary structure comprises 502 residues: Maturase K (502 aa).

It belongs to the intron maturase 2 family. MatK subfamily.

It is found in the plastid. The protein localises to the chloroplast. Usually encoded in the trnK tRNA gene intron. Probably assists in splicing its own and other chloroplast group II introns. This Tilia americana (American basswood) protein is Maturase K.